Here is a 192-residue protein sequence, read N- to C-terminus: Putative acetyltransferase YjbC (192 aa).

The 139-residue stretch at 1-139 folds into the N-acetyltransferase domain; that stretch reads MNWYEKLSEY…MEILYWSPKT (139 aa).

The protein resides in the cytoplasm. This is Putative acetyltransferase YjbC (yjbC) from Bacillus subtilis (strain 168).